The chain runs to 289 residues: Trihelix transcription factor GT-3b (289 aa).

In terms of domain architecture, Myb-like spans 42 to 98; it reads WSVEETKELIGIRGELDQTFMETKRNKLLWEVISNKMRDKSFPRSPEQCKCKWKNLV. The short motif at 65–81 is the Bipartite nuclear localization signal element; it reads KRNKLLWEVISNKMRDK. The tract at residues 137 to 200 is disordered; that stretch reads ESEGGGGGTS…SNSSNSNNGV (64 aa). Residues 156-168 show a composition bias toward acidic residues; it reads SDEEEENVNEELV. Residues 179–188 carry the Nuclear localization signal motif; it reads PKKNIAKKRK. Low complexity predominate over residues 190-199; the sequence is GSNSSNSNNG. A coiled-coil region spans residues 223–275; that stretch reads EAREKERAEKEEEWRRKMEELEKERLAMERMWRDREEQRRSREEMRAEKRDSL.

Heterodimer with GT-3A. Associated with the mediator complex.

It is found in the nucleus. In terms of biological role, probable transcription factor that may play a role in the induction of CAM4 in response to pathogen and salt. In Arabidopsis thaliana (Mouse-ear cress), this protein is Trihelix transcription factor GT-3b (GT-3B).